Reading from the N-terminus, the 267-residue chain is Phosphonoacetaldehyde hydrolase (267 aa).

Catalysis depends on Asp10, which acts as the Nucleophile. Mg(2+) contacts are provided by Asp10 and Ala12. Catalysis depends on Lys51, which acts as the Schiff-base intermediate with substrate. Asp184 contacts Mg(2+).

Belongs to the HAD-like hydrolase superfamily. PhnX family. Homodimer. Mg(2+) serves as cofactor.

The enzyme catalyses phosphonoacetaldehyde + H2O = acetaldehyde + phosphate + H(+). Its function is as follows. Involved in phosphonate degradation. The polypeptide is Phosphonoacetaldehyde hydrolase (Paraburkholderia xenovorans (strain LB400)).